The following is a 48-amino-acid chain: Photosystem II reaction center protein K (48 aa).

A propeptide spanning residues Met1–Ala11 is cleaved from the precursor. The chain crosses the membrane as a helical span at residues Ile23–Ala43.

This sequence belongs to the PsbK family. In terms of assembly, PSII is composed of 1 copy each of membrane proteins PsbA, PsbB, PsbC, PsbD, PsbE, PsbF, PsbH, PsbI, PsbJ, PsbK, PsbL, PsbM, PsbT, PsbY, PsbZ, Psb30/Ycf12, at least 3 peripheral proteins of the oxygen-evolving complex and a large number of cofactors. It forms dimeric complexes.

The protein resides in the plastid. Its subcellular location is the chloroplast thylakoid membrane. Its function is as follows. One of the components of the core complex of photosystem II (PSII). PSII is a light-driven water:plastoquinone oxidoreductase that uses light energy to abstract electrons from H(2)O, generating O(2) and a proton gradient subsequently used for ATP formation. It consists of a core antenna complex that captures photons, and an electron transfer chain that converts photonic excitation into a charge separation. This chain is Photosystem II reaction center protein K, found in Euglena sanguinea.